A 391-amino-acid polypeptide reads, in one-letter code: S-adenosylmethionine synthase 1 (391 aa).

Residue Glu9 coordinates Mg(2+). His15 contacts ATP. Residue Glu43 coordinates K(+). Glu56 and Gln99 together coordinate L-methionine. ATP-binding positions include 167 to 169 (DGK), 235 to 238 (SGRF), Asp246, 252 to 253 (RK), Ala269, Lys273, and Lys277. L-methionine is bound at residue Asp246. Residue Lys277 participates in L-methionine binding.

It belongs to the AdoMet synthase family. Homotetramer. The cofactor is Mn(2+). Mg(2+) is required as a cofactor. Co(2+) serves as cofactor. Requires K(+) as cofactor.

The protein localises to the cytoplasm. The enzyme catalyses L-methionine + ATP + H2O = S-adenosyl-L-methionine + phosphate + diphosphate. Its pathway is amino-acid biosynthesis; S-adenosyl-L-methionine biosynthesis; S-adenosyl-L-methionine from L-methionine: step 1/1. Functionally, catalyzes the formation of S-adenosylmethionine from methionine and ATP. The reaction comprises two steps that are both catalyzed by the same enzyme: formation of S-adenosylmethionine (AdoMet) and triphosphate, and subsequent hydrolysis of the triphosphate. This is S-adenosylmethionine synthase 1 (METK1) from Vitis vinifera (Grape).